Here is a 205-residue protein sequence, read N- to C-terminus: uncharacterized protein (205 aa).

This is an uncharacterized protein from Orgyia pseudotsugata (Douglas-fir tussock moth).